The primary structure comprises 84 residues: Large ribosomal subunit protein bL27 (84 aa).

A disordered region spans residues 1–29 (MAHKKGGGSTKNGRDSNPKYLGIKASGGS).

This sequence belongs to the bacterial ribosomal protein bL27 family.

This chain is Large ribosomal subunit protein bL27, found in Chlorobium phaeobacteroides (strain BS1).